The following is a 365-amino-acid chain: Probable 7-methylxanthine methyltransferase 3 (365 aa).

Tyr18 lines the S-adenosyl-L-homocysteine pocket. Thr25 contributes to the theobromine binding site. The S-adenosyl-L-homocysteine site is built by Cys62, Gln67, Asp99, Leu100, Ser132, and Phe133. The theobromine site is built by Tyr150, His153, and Trp154. Mg(2+) contacts are provided by Asn170, Phe258, and Asn259. Residue Phe311 participates in theobromine binding.

The protein belongs to the methyltransferase superfamily. Type-7 methyltransferase family. Mg(2+) serves as cofactor.

It catalyses the reaction 7-methylxanthine + S-adenosyl-L-methionine = theobromine + S-adenosyl-L-homocysteine + H(+). It participates in alkaloid biosynthesis. Involved in the biosynthesis of theobromine. In Theobroma cacao (Cacao), this protein is Probable 7-methylxanthine methyltransferase 3.